The sequence spans 328 residues: UDP-N-acetylglucosamine transporter YEA4 (328 aa).

Transmembrane regions (helical) follow at residues 1 to 21 (MSFV…VISF), 30 to 50 (INLG…IQLP), 66 to 86 (HIPL…SVAN), 98 to 118 (IHII…WAVC), 122 to 142 (YSKL…VASL), 166 to 186 (SMFG…LSLL), 198 to 218 (WKET…LGYT), 241 to 261 (LPIA…FICI), 274 to 294 (LTLS…SVYI), and 298 to 318 (VLSV…GLYS).

This sequence belongs to the nucleotide-sugar transporter family. SLC35A subfamily.

Its subcellular location is the golgi apparatus membrane. Functionally, sugar transporter that specifically mediates the transport of UDP-N-acetylglucosamine (UDP-GlcNAc) from the cytosol into Golgi vesicles where glycosyltransferases function. The sequence is that of UDP-N-acetylglucosamine transporter YEA4 (YEA4) from Kluyveromyces lactis (strain ATCC 8585 / CBS 2359 / DSM 70799 / NBRC 1267 / NRRL Y-1140 / WM37) (Yeast).